The primary structure comprises 446 residues: MADRTEQILTPSQLNTLARDLLEGSFPLVWVEAELGNVTRPASGHLYFTLKDARAQIRCAMFKPKSTWLKFQPREGLRVLARGRLTLYEARGDYQLVLDHMEEAGEGALRRAFEELRARLAAEGVFDAERKQPLPAHVRRLAVITSPSGAAVRDVLSVLARRFPLLEVDILPSLVQGDSAAAQITSLLQRADASGRYDVILITRGGGSLEDLWAFNDERLARAIAAAHTPVVSAVGHETDVSLSDFAADVRAPTPSVAAELLVPDQRELVARVRRAQARLSQLQQHTLGQAMQHADRLALRLRARSPQARPQLLQRRQEDAARHLRARMQHILERLQARVQRAQAGVQSHSPQRHLAPLQQRLRAAHPQAAMQRRLQQDHLHLRGLVRSLEAVSPLATVARGYAIVTRQADGSVVRSAAELTQGDRLRAQLADGSVTVVVDTSETG.

The protein belongs to the XseA family. As to quaternary structure, heterooligomer composed of large and small subunits.

It is found in the cytoplasm. It carries out the reaction Exonucleolytic cleavage in either 5'- to 3'- or 3'- to 5'-direction to yield nucleoside 5'-phosphates.. Bidirectionally degrades single-stranded DNA into large acid-insoluble oligonucleotides, which are then degraded further into small acid-soluble oligonucleotides. In Xanthomonas campestris pv. campestris (strain B100), this protein is Exodeoxyribonuclease 7 large subunit.